We begin with the raw amino-acid sequence, 370 residues long: Putative FBD-associated F-box protein At1g50980 (370 aa).

The 47-residue stretch at 31–77 (IRTISEFPDKVLLKILSLLPSKDVVATGVLSKRWRSLWKDVKTFRTS) folds into the F-box domain. Residues 292 to 343 (LMGNQPDLIPKSLSSHLEILEWRQYNDTAQEREAAKYILANASGLRKATFYT) form the FBD domain.

This chain is Putative FBD-associated F-box protein At1g50980, found in Arabidopsis thaliana (Mouse-ear cress).